The primary structure comprises 148 residues: Ubiquitin-conjugating enzyme E2 4 (148 aa).

The interval 1-22 (MSSSKRIAKELSDLERDPPTSC) is disordered. The region spanning 2–148 (SSSKRIAKEL…AREWTKKYAV (147 aa)) is the UBC core domain. Residues 7–18 (IAKELSDLERDP) show a composition bias toward basic and acidic residues. The residue at position 12 (Ser-12) is a Phosphoserine. The active-site Glycyl thioester intermediate is Cys-86. A Glycyl lysine isopeptide (Lys-Gly) (interchain with G-Cter in ubiquitin) cross-link involves residue Lys-91.

The protein belongs to the ubiquitin-conjugating enzyme family. In terms of assembly, interacts with TUL1. Post-translationally, the N-terminus is blocked.

It catalyses the reaction S-ubiquitinyl-[E1 ubiquitin-activating enzyme]-L-cysteine + [E2 ubiquitin-conjugating enzyme]-L-cysteine = [E1 ubiquitin-activating enzyme]-L-cysteine + S-ubiquitinyl-[E2 ubiquitin-conjugating enzyme]-L-cysteine.. It functions in the pathway protein modification; protein ubiquitination. Functionally, E2 ubiquitin-conjugating enzyme that catalyzes the covalent attachment of ubiquitin to other proteins. Mediates the selective degradation of short-lived and abnormal proteins. Mediates ubiquitination of PEX5. This chain is Ubiquitin-conjugating enzyme E2 4, found in Saccharomyces cerevisiae (strain ATCC 204508 / S288c) (Baker's yeast).